We begin with the raw amino-acid sequence, 309 residues long: MSIRIVPKDQLGKQSEKGTTAGNIPPLLFANLKSLYTRRTERLQQLALDNPLADYLDFAAKITQAQQKALHDHPLVLDMQAELAQSAASGKPPLDLSVFPRTDHWRKLLSALIAELRHDAPDHIVAVLDNLDKASVHELELYADALLNREFAQIGSEKAPFIWAALSLYWAQMASQIPGKARAEYGEHRQFCPVCGSIPVSSVVHIGTQNGLRYLHCNLCESEWHVVRIKCSNCEQTRDLNYWSLDTELAAVKAESCGDCGTYLKILYQEKDPMVEAVADDLASLILDAKMEGEGFARSSINPFLFPGE.

Belongs to the FdhE family.

The protein resides in the cytoplasm. In terms of biological role, necessary for formate dehydrogenase activity. The chain is Protein FdhE homolog from Yersinia enterocolitica serotype O:8 / biotype 1B (strain NCTC 13174 / 8081).